The following is a 499-amino-acid chain: MFKLKQLHELIVPWISGINVKIPYLTGLELDSRNINFGNLFIAIQGYNTDGRLHIDDAINNGAVAILSESYNKSTFFIKKIVNNVEVIPIIYFNQLNKCISNIAGRFYDHPSLCLKLIGVTGTNGKTTITHLLTNWTSLLGERSAVMGTLGNGVLSDINPSCCTTCSAIETQKILKQFVQSGVTFVAMEISSHGLDQYRVDSLYFDVAIFSNISNDHLDYHNNINQYRMAKWRLFNELRVKNYVINVDDCVGYRWLLSLSNAVAVTIKNNLPRSWSGRWIALVKADYYLYGTKIVFKSSWGNGFIHSQLLGEVNVSNILLALGALLIMGYSLKSLLYTGSKLYPVCGRLEVLSCLNHPTVIVDYAHTPDALKKILIFAKHLCNKGRLWCIFGCGGNRDRSKRSLMGVIANRYSDYVIITNDNPRVEDPKLIIDDIICKIRNSEKLKIIEDRVYAINMVVSKACSDDFVLILGKGHEKYQNIGLNYISHSDQDIVKSIFK.

Positions 30 and 32 each coordinate UDP-N-acetyl-alpha-D-muramoyl-L-alanyl-D-glutamate. 122–128 (GTNGKTT) contributes to the ATP binding site. UDP-N-acetyl-alpha-D-muramoyl-L-alanyl-D-glutamate is bound by residues 164-165 (TT), Ser191, Gln197, and Arg199. Lys231 is modified (N6-carboxylysine). Meso-2,6-diaminopimelate contacts are provided by residues Arg397, 421-424 (DNPR), Gly472, and Glu476. Positions 421–424 (DNPR) match the Meso-diaminopimelate recognition motif motif.

This sequence belongs to the MurCDEF family. MurE subfamily. Mg(2+) is required as a cofactor. Post-translationally, carboxylation is probably crucial for Mg(2+) binding and, consequently, for the gamma-phosphate positioning of ATP.

Its subcellular location is the cytoplasm. It carries out the reaction UDP-N-acetyl-alpha-D-muramoyl-L-alanyl-D-glutamate + meso-2,6-diaminopimelate + ATP = UDP-N-acetyl-alpha-D-muramoyl-L-alanyl-gamma-D-glutamyl-meso-2,6-diaminopimelate + ADP + phosphate + H(+). It functions in the pathway cell wall biogenesis; peptidoglycan biosynthesis. In terms of biological role, catalyzes the addition of meso-diaminopimelic acid to the nucleotide precursor UDP-N-acetylmuramoyl-L-alanyl-D-glutamate (UMAG) in the biosynthesis of bacterial cell-wall peptidoglycan. This is UDP-N-acetylmuramoyl-L-alanyl-D-glutamate--2,6-diaminopimelate ligase from Blochmanniella floridana.